A 209-amino-acid polypeptide reads, in one-letter code: Orotate phosphoribosyltransferase (209 aa).

Residues arginine 96, lysine 100, histidine 102, and 122–130 each bind 5-phospho-alpha-D-ribose 1-diphosphate; that span reads EDLISTGGS. An orotate-binding site is contributed by serine 126.

It belongs to the purine/pyrimidine phosphoribosyltransferase family. PyrE subfamily. Homodimer. Mg(2+) is required as a cofactor.

The catalysed reaction is orotidine 5'-phosphate + diphosphate = orotate + 5-phospho-alpha-D-ribose 1-diphosphate. Its pathway is pyrimidine metabolism; UMP biosynthesis via de novo pathway; UMP from orotate: step 1/2. Functionally, catalyzes the transfer of a ribosyl phosphate group from 5-phosphoribose 1-diphosphate to orotate, leading to the formation of orotidine monophosphate (OMP). The protein is Orotate phosphoribosyltransferase of Streptococcus thermophilus (strain CNRZ 1066).